We begin with the raw amino-acid sequence, 189 residues long: Elongation factor P 2 (189 aa).

The protein belongs to the elongation factor P family.

It is found in the cytoplasm. It functions in the pathway protein biosynthesis; polypeptide chain elongation. Functionally, involved in peptide bond synthesis. Stimulates efficient translation and peptide-bond synthesis on native or reconstituted 70S ribosomes in vitro. Probably functions indirectly by altering the affinity of the ribosome for aminoacyl-tRNA, thus increasing their reactivity as acceptors for peptidyl transferase. The chain is Elongation factor P 2 (efp2) from Lactobacillus johnsonii (strain CNCM I-12250 / La1 / NCC 533).